The chain runs to 688 residues: MEPTRLVRPFEVVSEYQPSGDQPKAIAELAGRITAGETDVVLLGATGTGKSATTAWLVEAVQRPTLVLAHNKTLAAQLANEFRELLPNNAVEYFVSYYDYYQPEAYVPQTDTFIEKDSSINAEVERLRHSTTNSLLSRRDVVVVSTVSCIYGLGAAEEYLEAMVALQVGQNVGRDQLIRRFVAMQYERNDIDFSRGKFRVRGDTIEIIPVYEEHALRIELFGDEIEALYSLHPLTGEVLARTDAVSVFPATHYAASPATIQRAIGTIQTELHDRLVELEREGKLLEAQRLRMRTQFDIEMMEQIGFCSGIENYSRHIDGRAPGEAPHCLLDYFPDDFLVVIDESHVTVPQIGAMYEGDASRKRTLVEHGFRLPSAMDNRPLRWNEFKERVGQTVYLSATPGQYELGIADGVVEQIIRPTGLVDPQILVKPTKGQIDDLLEEIRARAERDERVLVTTLTKKMAEELTDFLAEAGVKVRYLHADVDTLRRVELLTELRSGVFDVLVGINLLREGLDLPEVSLVAILDADKEGFLRSSTSLIQTIGRAARNVSGEVHMYADVLTDSMKKAIEETSRRSELQVEYNRANGIDPQPLRKRIADITDILAREEADTAKILAGRDQKRKSPTPSLRSGGIAAQGAAELESLIADLNAQMLAAAGELKFELAARLRDELSDLKRDLRQMEKAGHLS.

The Helicase ATP-binding domain occupies 31–414; sequence GRITAGETDV…LGIADGVVEQ (384 aa). Residue 44–51 participates in ATP binding; the sequence is GATGTGKS. The Beta-hairpin motif lies at 97 to 120; that stretch reads YYDYYQPEAYVPQTDTFIEKDSSI. One can recognise a Helicase C-terminal domain in the interval 434 to 600; sequence QIDDLLEEIR…PLRKRIADIT (167 aa). The interval 614-633 is disordered; it reads LAGRDQKRKSPTPSLRSGGI. One can recognise a UVR domain in the interval 642-677; the sequence is ESLIADLNAQMLAAAGELKFELAARLRDELSDLKRD.

It belongs to the UvrB family. As to quaternary structure, forms a heterotetramer with UvrA during the search for lesions. Interacts with UvrC in an incision complex.

The protein localises to the cytoplasm. The UvrABC repair system catalyzes the recognition and processing of DNA lesions. A damage recognition complex composed of 2 UvrA and 2 UvrB subunits scans DNA for abnormalities. Upon binding of the UvrA(2)B(2) complex to a putative damaged site, the DNA wraps around one UvrB monomer. DNA wrap is dependent on ATP binding by UvrB and probably causes local melting of the DNA helix, facilitating insertion of UvrB beta-hairpin between the DNA strands. Then UvrB probes one DNA strand for the presence of a lesion. If a lesion is found the UvrA subunits dissociate and the UvrB-DNA preincision complex is formed. This complex is subsequently bound by UvrC and the second UvrB is released. If no lesion is found, the DNA wraps around the other UvrB subunit that will check the other stand for damage. The sequence is that of UvrABC system protein B from Leifsonia xyli subsp. xyli (strain CTCB07).